Here is a 119-residue protein sequence, read N- to C-terminus: Methylglyoxal synthase (119 aa).

The MGS-like domain occupies 1–119; the sequence is MKIALIAHDK…ESAKLIMADI (119 aa). Residues H8, K12, 34–37, and 54–55 contribute to the substrate site; these read TGTT and SG. The active-site Proton donor/acceptor is the D60. H87 serves as a coordination point for substrate.

The protein belongs to the methylglyoxal synthase family.

The enzyme catalyses dihydroxyacetone phosphate = methylglyoxal + phosphate. Functionally, catalyzes the formation of methylglyoxal from dihydroxyacetone phosphate. The chain is Methylglyoxal synthase from Clostridium perfringens (strain 13 / Type A).